Reading from the N-terminus, the 222-residue chain is Orotate phosphoribosyltransferase (222 aa).

K29 contributes to the 5-phospho-alpha-D-ribose 1-diphosphate binding site. 37-38 provides a ligand contact to orotate; the sequence is FF. 5-phospho-alpha-D-ribose 1-diphosphate contacts are provided by residues 75–76, R101, K102, K105, H107, and 126–134; these read YK and DDVISAGTS. S130 and R158 together coordinate orotate.

It belongs to the purine/pyrimidine phosphoribosyltransferase family. PyrE subfamily. As to quaternary structure, homodimer. Mg(2+) is required as a cofactor.

It catalyses the reaction orotidine 5'-phosphate + diphosphate = orotate + 5-phospho-alpha-D-ribose 1-diphosphate. It functions in the pathway pyrimidine metabolism; UMP biosynthesis via de novo pathway; UMP from orotate: step 1/2. Functionally, catalyzes the transfer of a ribosyl phosphate group from 5-phosphoribose 1-diphosphate to orotate, leading to the formation of orotidine monophosphate (OMP). The chain is Orotate phosphoribosyltransferase from Polynucleobacter necessarius subsp. necessarius (strain STIR1).